The primary structure comprises 286 residues: Aquaporin NIP1-3 (286 aa).

The segment at 1–44 is disordered; the sequence is MAGGEHGVNGQHEETRAMEEGSRDHQARCENSEQDGGSKSSSNN. Residues 11–31 are compositionally biased toward basic and acidic residues; the sequence is QHEETRAMEEGSRDHQARCEN. Polar residues predominate over residues 34–44; that stretch reads QDGGSKSSSNN. Transmembrane regions (helical) follow at residues 56 to 76 and 84 to 104; these read VIAE…AVAV and VTFP…VYSV. The short motif at 113 to 115 is the NPA 1 element; the sequence is NPA. The next 3 membrane-spanning stretches (helical) occupy residues 131–153, 172–192, and 200–220; these read VPAY…RALF, SLAM…GVAT, and LAGL…GPIS. Residues 225-227 carry the NPA 2 motif; the sequence is NPA. A helical transmembrane segment spans residues 239 to 259; sequence YTGIWVYIAGPVFGAVAGAWA.

It belongs to the MIP/aquaporin (TC 1.A.8) family. NIP (TC 1.A.8.12) subfamily.

It is found in the membrane. Functionally, aquaporins facilitate the transport of water and small neutral solutes across cell membranes. In Oryza sativa subsp. japonica (Rice), this protein is Aquaporin NIP1-3 (NIP1-3).